A 171-amino-acid polypeptide reads, in one-letter code: Tetratricopeptide repeat protein 9C (171 aa).

TPR repeat units lie at residues 8–41, 72–107, and 108–141; these read AQVY…LRGL, THCY…QPDN, and AKAL…QPKD.

It belongs to the TTC9 family.

The protein is Tetratricopeptide repeat protein 9C (Ttc9c) of Mus musculus (Mouse).